We begin with the raw amino-acid sequence, 581 residues long: Prolactin receptor (581 aa).

An N-terminal signal peptide occupies residues 1–24 (MKENAASRVLFILLLFLFASLLNG). Residues 25–237 (QSPPEKPKLI…NDFPVKDTSM (213 aa)) lie on the Extracellular side of the membrane. Fibronectin type-III domains lie at 27-127 (PPEK…IVEP) and 129-229 (PPVN…IPND). A disulfide bridge links Cys36 with Cys46. The N-linked (GlcNAc...) asparagine glycan is linked to Asn59. Cys75 and Cys86 form a disulfide bridge. A glycan (N-linked (GlcNAc...) asparagine) is linked at Asn132. 2 residues coordinate Zn(2+): Asp211 and His212. Positions 215-219 (WSEWS) match the WSXWS motif motif. The helical transmembrane segment at 238 to 258 (WIFVGVLSAVICLIMVWAVAL) threads the bilayer. At 259-581 (KGYSMVTCIL…SAKKAPPALP (323 aa)) the chain is on the cytoplasmic side. The short motif at 267 to 275 (ILPPVPGPK) is the Box 1 motif element. Basic and acidic residues-rich tracts occupy residues 323–349 (QHLM…DTDS) and 375–388 (HIPE…DPET). Disordered regions lie at residues 323–388 (QHLM…DPET) and 462–492 (FKPS…PDQD).

It belongs to the type I cytokine receptor family. Type 1 subfamily. Interacts with SMARCA1. Interacts with NEK3 and VAV2 and this interaction is prolactin-dependent. As to expression, expressed in all tissues examined; liver, pituitary, adrenal gland, ovary and fetal liver.

The protein resides in the membrane. This is a receptor for the anterior pituitary hormone prolactin. In Ovis aries (Sheep), this protein is Prolactin receptor (PRLR).